The primary structure comprises 269 residues: UPF0761 membrane protein NTHI0384 (269 aa).

6 consecutive transmembrane segments (helical) span residues 32 to 52, 89 to 109, 128 to 148, 168 to 188, 203 to 223, and 232 to 252; these read MLAI…FPVF, MSAV…NNID, FAIY…SIGI, LLSF…YTVV, FLAA…VVTF, and AMAT…VVLV.

This sequence belongs to the UPF0761 family.

It localises to the cell inner membrane. This is UPF0761 membrane protein NTHI0384 from Haemophilus influenzae (strain 86-028NP).